Reading from the N-terminus, the 878-residue chain is Outer membrane usher protein FimD (878 aa).

Positions 1–45 (MSYLNLRLYQRNTQCLHIRKHRLAGFFVRLVVACAFAAQAPLSSA) are cleaved as a signal peptide. A disulfide bridge connects residues C855 and C877.

This sequence belongs to the fimbrial export usher family.

It localises to the cell outer membrane. Its function is as follows. Involved in the export and assembly of FimA fimbrial subunits across the outer membrane. The polypeptide is Outer membrane usher protein FimD (fimD) (Escherichia coli (strain K12)).